The primary structure comprises 449 residues: Glutamyl-tRNA reductase (449 aa).

Substrate-binding positions include 58 to 61, Ser121, 126 to 128, and Gln132; these read TCNR and ETQ. The active-site Nucleophile is the Cys59. An NADP(+)-binding site is contributed by 203–208; that stretch reads GLGEMA.

This sequence belongs to the glutamyl-tRNA reductase family. In terms of assembly, homodimer.

The catalysed reaction is (S)-4-amino-5-oxopentanoate + tRNA(Glu) + NADP(+) = L-glutamyl-tRNA(Glu) + NADPH + H(+). It participates in porphyrin-containing compound metabolism; protoporphyrin-IX biosynthesis; 5-aminolevulinate from L-glutamyl-tRNA(Glu): step 1/2. Catalyzes the NADPH-dependent reduction of glutamyl-tRNA(Glu) to glutamate 1-semialdehyde (GSA). The protein is Glutamyl-tRNA reductase of Helicobacter pylori (strain Shi470).